Here is a 131-residue protein sequence, read N- to C-terminus: Translation initiation factor 5A (131 aa).

Lysine 36 bears the Hypusine mark.

Belongs to the eIF-5A family.

It localises to the cytoplasm. Its function is as follows. Functions by promoting the formation of the first peptide bond. This is Translation initiation factor 5A (eIF5A) from Saccharolobus islandicus (strain Y.N.15.51 / Yellowstone #2) (Sulfolobus islandicus).